We begin with the raw amino-acid sequence, 282 residues long: Pantothenate synthetase (282 aa).

30-37 is a binding site for ATP; the sequence is MGYLHEGH. His-37 acts as the Proton donor in catalysis. Gln-61 is a (R)-pantoate binding site. Gln-61 contacts beta-alanine. An ATP-binding site is contributed by 147-150; it reads GMKD. Position 153 (Gln-153) interacts with (R)-pantoate. ATP contacts are provided by residues Val-176 and 184 to 187; that span reads KSSR.

The protein belongs to the pantothenate synthetase family. As to quaternary structure, homodimer.

It is found in the cytoplasm. The catalysed reaction is (R)-pantoate + beta-alanine + ATP = (R)-pantothenate + AMP + diphosphate + H(+). The protein operates within cofactor biosynthesis; (R)-pantothenate biosynthesis; (R)-pantothenate from (R)-pantoate and beta-alanine: step 1/1. Catalyzes the condensation of pantoate with beta-alanine in an ATP-dependent reaction via a pantoyl-adenylate intermediate. This Bacillus cereus (strain AH187) protein is Pantothenate synthetase.